The primary structure comprises 469 residues: Keratin, type I cytoskeletal 16 (469 aa).

Positions 1–20 (MATCSRQFTSSSSMKGSCGI) are disordered. The tract at residues 1-112 (MATCSRQFTS…GIGDGLLVGS (112 aa)) is head. Residues 113 to 148 (EKVTMQNLNDRLATYLDKVRALEEANRDLEVKIRDW) form a coil 1A region. An IF rod domain is found at 113 to 424 (EKVTMQNLND…RLLDGENIHS (312 aa)). The tract at residues 149 to 166 (YQRQRPTEIKDYSPYFKT) is linker 1. The tract at residues 167 to 258 (IEDLKSKIII…KNHEEEMLAL (92 aa)) is coil 1B. Residues 259–281 (RGQTGGDVNVEMDAAPGVDLSRI) form a linker 12 region. Residues 282 to 420 (LNEMRDQYEQ…ATYRRLLDGE (139 aa)) form a coil 2 region. The tract at residues 421–469 (NIHSSSQHSSGQSYSSREVFSSSSRQPRSILKEQGSTSFSQSQSQSSRD) is tail. The tract at residues 422–469 (IHSSSQHSSGQSYSSREVFSSSSRQPRSILKEQGSTSFSQSQSQSSRD) is disordered. 2 stretches are compositionally biased toward low complexity: residues 423 to 444 (HSSSQHSSGQSYSSREVFSSSS) and 454 to 469 (QGSTSFSQSQSQSSRD).

It belongs to the intermediate filament family. As to quaternary structure, heterodimer of a type I and a type II keratin. KRT16 associates with KRT6 isomers (KRT6A or KRT6B). Interacts with TCHP. Interacts with TRADD. In terms of tissue distribution, expressed in the epithelia of the tongue, upper and lower palate, footpad, proximal nail fold and nail bed, penile spine, sweat gland ducts, and back epidermis (at protein level). Expressed in upper suprabasal layers of the corneal epithelium (at protein level). Expressed in internal stratified epithelia in the esophagus and vagina (at protein level). Expressed in transitional stratified squamous epithelia in the forestomach, anal canal, and nasal cavity (at protein level). Expressed in transitional epithelia of the ureter, bladder and urethra (at protein level). In mature hair follicles, expressed in the companion layer of the outer root sheath during anagen and in the club hair sheath during catagen and telogen (at protein level).

In terms of biological role, epidermis-specific type I keratin that plays a key role in skin. Acts as a regulator of innate immunity in response to skin barrier breach: required for some inflammatory checkpoint for the skin barrier maintenance. The chain is Keratin, type I cytoskeletal 16 (Krt16) from Mus musculus (Mouse).